The chain runs to 75 residues: Small ribosomal subunit protein bS18 (75 aa).

This sequence belongs to the bacterial ribosomal protein bS18 family. Part of the 30S ribosomal subunit. Forms a tight heterodimer with protein bS6.

In terms of biological role, binds as a heterodimer with protein bS6 to the central domain of the 16S rRNA, where it helps stabilize the platform of the 30S subunit. The chain is Small ribosomal subunit protein bS18 from Shewanella baltica (strain OS223).